The chain runs to 316 residues: Pantothenate kinase (316 aa).

Residue 95–102 coordinates ATP; sequence GSVAVGKS.

Belongs to the prokaryotic pantothenate kinase family.

It localises to the cytoplasm. It catalyses the reaction (R)-pantothenate + ATP = (R)-4'-phosphopantothenate + ADP + H(+). Its pathway is cofactor biosynthesis; coenzyme A biosynthesis; CoA from (R)-pantothenate: step 1/5. The protein is Pantothenate kinase of Pectobacterium carotovorum subsp. carotovorum (strain PC1).